Reading from the N-terminus, the 343-residue chain is Glyceraldehyde-3-phosphate dehydrogenase 1 (343 aa).

NAD(+) contacts are provided by residues 13–14, Asp-35, Arg-79, and Ser-121; that span reads RI. D-glyceraldehyde 3-phosphate-binding positions include 154-156, Thr-185, 214-215, and Arg-237; these read SCT and TG. Cys-155 (nucleophile) is an active-site residue. Position 319 (Asn-319) interacts with NAD(+).

The protein belongs to the glyceraldehyde-3-phosphate dehydrogenase family. Homotetramer.

Its subcellular location is the cytoplasm. It catalyses the reaction D-glyceraldehyde 3-phosphate + phosphate + NAD(+) = (2R)-3-phospho-glyceroyl phosphate + NADH + H(+). It participates in carbohydrate degradation; glycolysis; pyruvate from D-glyceraldehyde 3-phosphate: step 1/5. In terms of biological role, catalyzes the oxidative phosphorylation of glyceraldehyde 3-phosphate (G3P) to 1,3-bisphosphoglycerate (BPG) using the cofactor NAD. The first reaction step involves the formation of a hemiacetal intermediate between G3P and a cysteine residue, and this hemiacetal intermediate is then oxidized to a thioester, with concomitant reduction of NAD to NADH. The reduced NADH is then exchanged with the second NAD, and the thioester is attacked by a nucleophilic inorganic phosphate to produce BPG. This chain is Glyceraldehyde-3-phosphate dehydrogenase 1 (gap1), found in Trichormus variabilis (strain ATCC 29413 / PCC 7937) (Anabaena variabilis).